The sequence spans 152 residues: Transcriptional regulator MraZ (152 aa).

2 SpoVT-AbrB domains span residues 7 to 54 (INSI…TMDE) and 83 to 126 (ASEM…SQEA).

This sequence belongs to the MraZ family. As to quaternary structure, forms oligomers.

It is found in the cytoplasm. It localises to the nucleoid. The polypeptide is Transcriptional regulator MraZ (Hydrogenovibrio crunogenus (strain DSM 25203 / XCL-2) (Thiomicrospira crunogena)).